We begin with the raw amino-acid sequence, 110 residues long: Circadian clock oscillator protein KaiB (110 aa).

This sequence belongs to the KaiB family. As to quaternary structure, the KaiABC complex composition changes during the circadian cycle to control KaiC phosphorylation. Complexes KaiC(6), KaiA(2-4):KaiC(6), KaiB(6):KaiC(6) and KaiC(6):KaiB(6):KaiA(12) are among the most important forms, many form cooperatively. Undergoes a major conformational rearrangment; in the free state forms homotetramers as a dimer of dimers. When bound to the CI domain of KaiC switches to a monomeric thioredoxin-fold (KaiB(fs)). KaiB(fs) binds CikA, leading it to dephosphorylate phospho-RpaA.

In terms of biological role, key component of the KaiABC oscillator complex, which constitutes the main circadian regulator in cyanobacteria. Complex composition changes during the circadian cycle to control KaiC phosphorylation. KaiA stimulates KaiC autophosphorylation, while KaiB sequesters KaiA, leading to KaiC autodephosphorylation. Phospho-Ser-431 KaiC accumulation triggers binding of KaiB to form the KaiB(6):KaiC(6) complex, leading to changes in output regulators CikA and SasA. KaiB switches to a thioredoxin-like fold (KaiB(fs)) when bound to KaiC. KaiB(6):KaiC(6) formation exposes a site for KaiA binding that sequesters KaiA from KaiC, making the KaiC(6):KaiB(6):KaiA(12) complex that results in KaiC autodephosphorylation. A metamorphic protein which reversibly switches between an inactive tetrameric fold and a rare, thioredoxin-like monomeric fold (KaiB(fs)). KaiB(fs) binds phospho-KaiC, KaiA and CikA. KaiA and CikA compete for binding to KaiB(fs), and KaiB(fs) and SasA compete for binding to KaiC, thus the clock oscillator and output signal pathway are tightly coupled. In Synechococcus sp. (strain RCC307), this protein is Circadian clock oscillator protein KaiB.